The chain runs to 144 residues: Large ribosomal subunit protein uL15 (144 aa).

Residues 1-60 (MKMNTLKPAEGSKQSPKRLGRGIGSGLGKTGGRGHKGQTSRSGGTIRPGFEGGQQPLQRR) form a disordered region. The segment covering 21–31 (RGIGSGLGKTG) has biased composition (gly residues).

Belongs to the universal ribosomal protein uL15 family. Part of the 50S ribosomal subunit.

Its function is as follows. Binds to the 23S rRNA. The polypeptide is Large ribosomal subunit protein uL15 (Hahella chejuensis (strain KCTC 2396)).